Consider the following 430-residue polypeptide: Putative O-antigen transporter (430 aa).

Helical transmembrane passes span 23–39 (IIIA…LISM), 45–61 (YAIF…CSAV), 96–112 (IAII…SGVI), 131–147 (LFFT…IGAI), 163–179 (LLNA…LLYI), 192–208 (LIVL…CYIV), 236–252 (LFTL…YMVI), 266–282 (VTMK…TAIL), 309–325 (ILLG…FIYL), 342–358 (VSIL…CIRV), 373–389 (LKIL…IGGI), and 400–416 (ISGV…LTVF).

Its subcellular location is the cell inner membrane. The protein operates within bacterial outer membrane biogenesis; LPS O-antigen biosynthesis. May be involved in the translocation process of the nascent O-polysaccharide molecules and/or its ligation to lipid A core units. The protein is Putative O-antigen transporter (rfbX) of Salmonella typhimurium (strain LT2 / SGSC1412 / ATCC 700720).